A 522-amino-acid chain; its full sequence is Amphoterin-induced protein 2 (522 aa).

The N-terminal stretch at 1-39 is a signal peptide; that stretch reads MSLRVHTLPTLLGAVVRPGCRELLCLLMITVAVGPGASG. The LRRNT domain occupies 40 to 68; sequence VCPTACICATDIVSCTNKHLSKVPGNLFR. At 40–398 the chain is on the extracellular side; sequence VCPTACICAT…RSHAHEAFNT (359 aa). 2 cysteine pairs are disulfide-bonded: cysteine 41–cysteine 47 and cysteine 45–cysteine 54. LRR repeat units lie at residues 69-90, 94-115, 118-139, 142-163, 166-187, and 193-214; these read LMKR…WIPV, KLNT…SFST, NLKC…VFQE, VLEV…AFGG, QLQK…LYVG, and ELMF…HINL. N-linked (GlcNAc...) asparagine glycosylation is present at asparagine 104. One can recognise an LRRCT domain in the interval 228-284; it reads NPFVCDCSLYSLLVFWYRRHFSSVMDFKNDYTCRLWSDSRHSRQVLLLQDSFMNCSD. 2 disulfide bridges follow: cysteine 232/cysteine 260 and cysteine 234/cysteine 282. 6 N-linked (GlcNAc...) asparagine glycosylation sites follow: asparagine 281, asparagine 288, asparagine 345, asparagine 373, asparagine 381, and asparagine 384. The Ig-like C2-type domain maps to 289 to 379; that stretch reads GSFRALGFIH…RLLNETVDVT (91 aa). The cysteines at positions 310 and 363 are disulfide-linked. Residues 399–419 form a helical membrane-spanning segment; it reads AFTTLAACVASIVLVLLYLYL. Topologically, residues 420–522 are cytoplasmic; that stretch reads TPCPCKCKTK…FSDTPFVAST (103 aa). The interval 501-522 is disordered; that stretch reads RGKSDSDSVNSVFSDTPFVAST.

The protein belongs to the immunoglobulin superfamily. AMIGO family. As to quaternary structure, binds itself as well as AMIGO1 and AMIGO3.

It localises to the cell membrane. The protein localises to the nucleus. Its function is as follows. Required for depolarization-dependent survival of cultured cerebellar granule neurons. May mediate homophilic as well as heterophilic cell-cell interaction with AMIGO1 or AMIGO3. May contribute to signal transduction through its intracellular domain. In Pongo abelii (Sumatran orangutan), this protein is Amphoterin-induced protein 2.